We begin with the raw amino-acid sequence, 531 residues long: Na(+)/H(+) antiporter NhaB (531 aa).

Transmembrane regions (helical) follow at residues 13 to 33 (FLGKAPDWYKIAIISFLIINP), 34 to 54 (LVFFFVDPFAAGWLLVVEFIF), 90 to 110 (LVANIEVLLLLVFMVAGIYFM), 121 to 141 (ILIGIKSKTALSVAFCFTAAF), 145 to 165 (FLDALTVIAVVISVAVGFYAI), 206 to 226 (LLMHAGVGTALGGVMTMVGEP), 242 to 262 (FIIRMLPVTAPVFICGLLTCV), 308 to 328 (VIAVWLIVALAMHLAAVGLIG), 352 to 372 (EEALPFTALLAVFFAIVAVII), 394 to 414 (LALFYVANGILSMVSDNVFVG), 456 to 476 (GQAAFLFLLTSALAPLIQLSY), and 482 to 502 (MALPYTIVLALVGLFGISFLL).

Belongs to the NhaB Na(+)/H(+) (TC 2.A.34) antiporter family.

It localises to the cell inner membrane. It catalyses the reaction 2 Na(+)(in) + 3 H(+)(out) = 2 Na(+)(out) + 3 H(+)(in). Its function is as follows. Na(+)/H(+) antiporter that extrudes sodium in exchange for external protons. The protein is Na(+)/H(+) antiporter NhaB of Aliivibrio salmonicida (strain LFI1238) (Vibrio salmonicida (strain LFI1238)).